The primary structure comprises 31 residues: Cytochrome b6-f complex subunit 6 (31 aa).

A helical membrane pass occupies residues 4 to 26 (ITSYFGFLLAASTITTALFIGLS).

The protein belongs to the PetL family. In terms of assembly, the 4 large subunits of the cytochrome b6-f complex are cytochrome b6, subunit IV (17 kDa polypeptide, PetD), cytochrome f and the Rieske protein, while the 4 small subunits are PetG, PetL, PetM and PetN. The complex functions as a dimer.

It localises to the plastid. It is found in the chloroplast thylakoid membrane. In terms of biological role, component of the cytochrome b6-f complex, which mediates electron transfer between photosystem II (PSII) and photosystem I (PSI), cyclic electron flow around PSI, and state transitions. PetL is important for photoautotrophic growth as well as for electron transfer efficiency and stability of the cytochrome b6-f complex. The chain is Cytochrome b6-f complex subunit 6 from Acorus calamus (Sweet flag).